The chain runs to 148 residues: UPF0756 membrane protein YeaL (148 aa).

4 helical membrane-spanning segments follow: residues 14–34 (ALGF…LIIV), 51–71 (LTIG…SGSL), 80–100 (FFNW…WLGG), and 121–141 (VLGV…AGLV).

Belongs to the UPF0756 family.

It localises to the cell membrane. The chain is UPF0756 membrane protein YeaL from Escherichia fergusonii (strain ATCC 35469 / DSM 13698 / CCUG 18766 / IAM 14443 / JCM 21226 / LMG 7866 / NBRC 102419 / NCTC 12128 / CDC 0568-73).